A 244-amino-acid chain; its full sequence is 23S rRNA (guanosine-2'-O-)-methyltransferase RlmB (244 aa).

Residues G196, I216, and L225 each coordinate S-adenosyl-L-methionine.

The protein belongs to the class IV-like SAM-binding methyltransferase superfamily. RNA methyltransferase TrmH family. RlmB subfamily. In terms of assembly, homodimer.

It localises to the cytoplasm. It carries out the reaction guanosine(2251) in 23S rRNA + S-adenosyl-L-methionine = 2'-O-methylguanosine(2251) in 23S rRNA + S-adenosyl-L-homocysteine + H(+). Its function is as follows. Specifically methylates the ribose of guanosine 2251 in 23S rRNA. This is 23S rRNA (guanosine-2'-O-)-methyltransferase RlmB from Photorhabdus laumondii subsp. laumondii (strain DSM 15139 / CIP 105565 / TT01) (Photorhabdus luminescens subsp. laumondii).